The primary structure comprises 504 residues: MANANSPKSSTPLGEGVPPRVRFCPSPTGNPHVGLVRTALFNWAFARHTGGTFVFRIEDTDAARDSEESYEQLLDSLRWLGFDWDEGPGVGGPHAPYRQSQRMDLYKDVAQKLLDGGYAYHCYCSTEELDTRRDAARAAGKPSGYDGHCRELSAEQKAAYEAEGRTPIVRFRMPDEPITFTDLVRGDITYLPENVPDYGIVRANGAPLYTLVNPVDDALMEITHVLRGEDLLSSTPRQVALYRALIELGIAKSVPEFGHLPYVMGEGNKKLSKRDPQASLNLYRERGFLPEGLLNYLSLLGWSLSADRDIFTIDEMVAAFDVKDVNPNPARFDLKKCEAINADHIRLLDVKDFTERCRPWLKAPFANWAPEDFDEAKWQVIAPYAQSRLKVLSEITDNVDFLFLPEPVFDEASWTKAMKEGSDALLRTAREKLEAADWTSPESLKEAVLAAGEEHGLKLGKAQAPVRVAVTGRTVGLPLFESLEILGKEKTLARVDAALAKLTA.

The 'HIGH' region motif lies at 25 to 35 (PSPTGNPHVGL). Cys-122, Cys-124, Cys-149, and Glu-151 together coordinate Zn(2+). Residues 270 to 274 (KLSKR) carry the 'KMSKS' region motif. Residue Lys-273 participates in ATP binding.

Belongs to the class-I aminoacyl-tRNA synthetase family. Glutamate--tRNA ligase type 1 subfamily. As to quaternary structure, monomer. Zn(2+) is required as a cofactor.

It localises to the cytoplasm. The catalysed reaction is tRNA(Glu) + L-glutamate + ATP = L-glutamyl-tRNA(Glu) + AMP + diphosphate. Functionally, catalyzes the attachment of glutamate to tRNA(Glu) in a two-step reaction: glutamate is first activated by ATP to form Glu-AMP and then transferred to the acceptor end of tRNA(Glu). In Streptomyces avermitilis (strain ATCC 31267 / DSM 46492 / JCM 5070 / NBRC 14893 / NCIMB 12804 / NRRL 8165 / MA-4680), this protein is Glutamate--tRNA ligase.